Consider the following 699-residue polypeptide: Elongation factor G (699 aa).

The region spanning 8–283 is the tr-type G domain; it reads EHIRNIGICA…AVVDFLPSPI (276 aa). GTP contacts are provided by residues 17–24, 81–85, and 135–138; these read AHIDAGKT, DTPGH, and NKMD.

The protein belongs to the TRAFAC class translation factor GTPase superfamily. Classic translation factor GTPase family. EF-G/EF-2 subfamily.

The protein localises to the cytoplasm. Its function is as follows. Catalyzes the GTP-dependent ribosomal translocation step during translation elongation. During this step, the ribosome changes from the pre-translocational (PRE) to the post-translocational (POST) state as the newly formed A-site-bound peptidyl-tRNA and P-site-bound deacylated tRNA move to the P and E sites, respectively. Catalyzes the coordinated movement of the two tRNA molecules, the mRNA and conformational changes in the ribosome. This chain is Elongation factor G, found in Rickettsia rickettsii (strain Iowa).